Here is a 535-residue protein sequence, read N- to C-terminus: Keratin, type II cytoskeletal 79 (535 aa).

The span at 1 to 12 shows a compositional bias: polar residues; that stretch reads MRSSVSRQTYST. The interval 1–52 is disordered; sequence MRSSVSRQTYSTKGGFSSNSASGGSGSQARTSFSSVTVSRSSGSGGGAHCGP. The segment at 1–141 is head; sequence MRSSVSRQTY…DPEIQRVRTQ (141 aa). Over residues 32–42 the composition is skewed to low complexity; the sequence is SFSSVTVSRSS. Over residues 43-52 the composition is skewed to gly residues; the sequence is GSGGGAHCGP. The interval 142–177 is coil 1A; that stretch reads EREQIKTLNNKFASFIDKVRFLEQQNKVLETKWALL. The 316-residue stretch at 142–457 folds into the IF rod domain; that stretch reads EREQIKTLNN…KLLESEESRM (316 aa). The tract at residues 178 to 198 is linker 1; it reads QEQGQNLGVTRNNLEPLFEAY. The segment at 199-290 is coil 1B; the sequence is LGSMRSTLDR…QLYEMELSQV (92 aa). The tract at residues 291–314 is linker 12; that stretch reads QTHVSNTNVVLSMDNNRNLDLDSI. Residues 315 to 453 are coil 2; sequence IAEVKAQYEL…ATYRKLLESE (139 aa). The interval 454-535 is tail; the sequence is ESRMSGECPS…TTVKTSSQRY (82 aa).

It belongs to the intermediate filament family. Heterotetramer of two type I and two type II keratins. Expressed in skeletal muscle, skin and scalp, but not in any other tissues or organs examined.

This is Keratin, type II cytoskeletal 79 (KRT79) from Homo sapiens (Human).